Consider the following 202-residue polypeptide: Putative 3-methyladenine DNA glycosylase (202 aa).

Belongs to the DNA glycosylase MPG family.

The protein is Putative 3-methyladenine DNA glycosylase of Clostridium botulinum (strain Alaska E43 / Type E3).